Reading from the N-terminus, the 189-residue chain is NADH-quinone oxidoreductase subunit B (189 aa).

[4Fe-4S] cluster is bound by residues Cys-39, Cys-40, Cys-104, and Cys-135.

It belongs to the complex I 20 kDa subunit family. In terms of assembly, NDH-1 is composed of 14 different subunits. Subunits NuoB, C, D, E, F, and G constitute the peripheral sector of the complex. It depends on [4Fe-4S] cluster as a cofactor.

Its subcellular location is the cell inner membrane. The catalysed reaction is a quinone + NADH + 5 H(+)(in) = a quinol + NAD(+) + 4 H(+)(out). NDH-1 shuttles electrons from NADH, via FMN and iron-sulfur (Fe-S) centers, to quinones in the respiratory chain. The immediate electron acceptor for the enzyme in this species is believed to be a menaquinone. Couples the redox reaction to proton translocation (for every two electrons transferred, four hydrogen ions are translocated across the cytoplasmic membrane), and thus conserves the redox energy in a proton gradient. The sequence is that of NADH-quinone oxidoreductase subunit B from Pelodictyon phaeoclathratiforme (strain DSM 5477 / BU-1).